Reading from the N-terminus, the 1214-residue chain is ATP-dependent helicase/nuclease subunit A (1214 aa).

Residues His-27–Gln-483 enclose the UvrD-like helicase ATP-binding domain. Position 48 to 55 (Ala-48 to Thr-55) interacts with ATP. Residues Gln-512–Gly-800 form the UvrD-like helicase C-terminal domain.

This sequence belongs to the helicase family. AddA subfamily. In terms of assembly, heterodimer of AddA and AddB/RexB. Mg(2+) serves as cofactor.

The enzyme catalyses Couples ATP hydrolysis with the unwinding of duplex DNA by translocating in the 3'-5' direction.. It carries out the reaction ATP + H2O = ADP + phosphate + H(+). The heterodimer acts as both an ATP-dependent DNA helicase and an ATP-dependent, dual-direction single-stranded exonuclease. Recognizes the chi site generating a DNA molecule suitable for the initiation of homologous recombination. The AddA nuclease domain is required for chi fragment generation; this subunit has the helicase and 3' -&gt; 5' nuclease activities. The polypeptide is ATP-dependent helicase/nuclease subunit A (Streptococcus equi subsp. zooepidemicus (strain MGCS10565)).